Here is an 813-residue protein sequence, read N- to C-terminus: Leucine--tRNA ligase (813 aa).

Positions 39–49 match the 'HIGH' region motif; sequence PYPSGRIHMGH. Positions 582 to 586 match the 'KMSKS' region motif; the sequence is KMSKS. An ATP-binding site is contributed by K585.

It belongs to the class-I aminoacyl-tRNA synthetase family.

The protein resides in the cytoplasm. It carries out the reaction tRNA(Leu) + L-leucine + ATP = L-leucyl-tRNA(Leu) + AMP + diphosphate. This is Leucine--tRNA ligase from Campylobacter hominis (strain ATCC BAA-381 / DSM 21671 / CCUG 45161 / LMG 19568 / NCTC 13146 / CH001A).